A 288-amino-acid polypeptide reads, in one-letter code: uncharacterized protein (288 aa).

The ATP-grasp domain maps to 107–288 (KQIPTLIGPQ…LAIQLLASIA (182 aa)). Residues lysine 145 and 178-188 (QQYIATSNSEA) each bind ATP. Mg(2+) is bound by residues aspartate 248, glutamate 261, and asparagine 263. Mn(2+) contacts are provided by aspartate 248, glutamate 261, and asparagine 263.

Belongs to the RimK family.

This is an uncharacterized protein from Mycoplasma pneumoniae (strain ATCC 29342 / M129 / Subtype 1) (Mycoplasmoides pneumoniae).